The chain runs to 108 residues: UPF0102 protein Shewana3_3881 (108 aa).

It belongs to the UPF0102 family.

The protein is UPF0102 protein Shewana3_3881 of Shewanella sp. (strain ANA-3).